Consider the following 37-residue polypeptide: Photosystem II reaction center protein Psb30 (37 aa).

The chain crosses the membrane as a helical span at residues 10–30; it reads LISLLLLTLIMLAGPAVIALW.

It belongs to the Psb30/Ycf12 family. In terms of assembly, PSII is composed of 1 copy each of membrane proteins PsbA, PsbB, PsbC, PsbD, PsbE, PsbF, PsbH, PsbI, PsbJ, PsbK, PsbL, PsbM, PsbT, PsbX, Psb30/Ycf12, peripheral proteins PsbO, CyanoQ (PsbQ), PsbU, PsbV and a large number of cofactors. It forms dimeric complexes.

It localises to the cell inner membrane. Its function is as follows. A core subunit of photosystem II (PSII), probably helps stabilize the reaction center. The polypeptide is Photosystem II reaction center protein Psb30 (Gloeobacter violaceus (strain ATCC 29082 / PCC 7421)).